The following is a 216-amino-acid chain: Ethylene-responsive transcription factor ERF016 (216 aa).

A DNA-binding region (AP2/ERF) is located at residues 6-63 (KYTGVRKRKWGKWVAEIRLPNSRDRIWLGSFDSAEKAARAFDAALYCLRGPGARFNFP). The disordered stretch occupies residues 121-145 (EINSGSGGPTLGQVGEDNNNEGNSN). The segment covering 135–145 (GEDNNNEGNSN) has biased composition (low complexity).

Belongs to the AP2/ERF transcription factor family. ERF subfamily.

The protein resides in the nucleus. In terms of biological role, probably acts as a transcriptional activator. Binds to the GCC-box pathogenesis-related promoter element. May be involved in the regulation of gene expression by stress factors and by components of stress signal transduction pathways. The chain is Ethylene-responsive transcription factor ERF016 (ERF016) from Arabidopsis thaliana (Mouse-ear cress).